The sequence spans 139 residues: Arsenate reductase (139 aa).

Catalysis depends on nucleophile residues Cys-10, Cys-82, and Cys-89. Intrachain disulfides connect Cys-10-Cys-82 and Cys-82-Cys-89.

It belongs to the low molecular weight phosphotyrosine protein phosphatase family. Thioredoxin-coupled ArsC subfamily.

The protein localises to the cytoplasm. It catalyses the reaction arsenate + [thioredoxin]-dithiol + H(+) = arsenite + [thioredoxin]-disulfide + H2O. Its function is as follows. Catalyzes the reduction of arsenate [As(V)] to arsenite [As(III)]. This chain is Arsenate reductase, found in Bacillus licheniformis (strain ATCC 14580 / DSM 13 / JCM 2505 / CCUG 7422 / NBRC 12200 / NCIMB 9375 / NCTC 10341 / NRRL NRS-1264 / Gibson 46).